The sequence spans 102 residues: Small ribosomal subunit protein uS10 (102 aa).

This sequence belongs to the universal ribosomal protein uS10 family. In terms of assembly, part of the 30S ribosomal subunit.

In terms of biological role, involved in the binding of tRNA to the ribosomes. The polypeptide is Small ribosomal subunit protein uS10 (Methanosphaera stadtmanae (strain ATCC 43021 / DSM 3091 / JCM 11832 / MCB-3)).